The primary structure comprises 465 residues: Ribulose bisphosphate carboxylase large chain (465 aa).

An N6,N6,N6-trimethyllysine modification is found at Lys-4. The substrate site is built by Asn-113 and Thr-163. Residue Lys-165 is the Proton acceptor of the active site. Lys-167 lines the substrate pocket. Mg(2+) is bound by residues Lys-191, Asp-193, and Glu-194. Position 191 is an N6-carboxylysine (Lys-191). The active-site Proton acceptor is the His-284. Residues Arg-285, His-317, and Ser-369 each contribute to the substrate site.

Belongs to the RuBisCO large chain family. Type I subfamily. As to quaternary structure, heterohexadecamer of 8 large chains and 8 small chains; disulfide-linked. The disulfide link is formed within the large subunit homodimers. The cofactor is Mg(2+). In terms of processing, the disulfide bond which can form in the large chain dimeric partners within the hexadecamer appears to be associated with oxidative stress and protein turnover.

It localises to the plastid. It is found in the chloroplast. It catalyses the reaction 2 (2R)-3-phosphoglycerate + 2 H(+) = D-ribulose 1,5-bisphosphate + CO2 + H2O. It carries out the reaction D-ribulose 1,5-bisphosphate + O2 = 2-phosphoglycolate + (2R)-3-phosphoglycerate + 2 H(+). Functionally, ruBisCO catalyzes two reactions: the carboxylation of D-ribulose 1,5-bisphosphate, the primary event in carbon dioxide fixation, as well as the oxidative fragmentation of the pentose substrate in the photorespiration process. Both reactions occur simultaneously and in competition at the same active site. This Cornus canadensis (Bunchberry dogwood) protein is Ribulose bisphosphate carboxylase large chain.